The primary structure comprises 233 residues: Cilia- and flagella-associated protein 299 (233 aa).

Abundantly expressed in testis, specifically in spermatogonia and primary spermatocytes but not in secondary spermatocytes and spermatids.

It is found in the cytoplasm. Its subcellular location is the nucleus. In terms of biological role, may be involved in spermatogenesis. The protein is Cilia- and flagella-associated protein 299 of Mus musculus (Mouse).